The sequence spans 158 residues: Protein Smg homolog (158 aa).

The protein belongs to the Smg family.

The protein is Protein Smg homolog of Herminiimonas arsenicoxydans.